We begin with the raw amino-acid sequence, 248 residues long: 4-hydroxy-tetrahydrodipicolinate reductase (248 aa).

NAD(+)-binding positions include 9–14, 77–79, and 104–107; these read GAKGRV, GTT, and APNF. His134 (proton donor/acceptor) is an active-site residue. His135 contacts (S)-2,3,4,5-tetrahydrodipicolinate. Residue Lys138 is the Proton donor of the active site. 144-145 contacts (S)-2,3,4,5-tetrahydrodipicolinate; it reads GT.

It belongs to the DapB family.

Its subcellular location is the cytoplasm. The enzyme catalyses (S)-2,3,4,5-tetrahydrodipicolinate + NAD(+) + H2O = (2S,4S)-4-hydroxy-2,3,4,5-tetrahydrodipicolinate + NADH + H(+). It catalyses the reaction (S)-2,3,4,5-tetrahydrodipicolinate + NADP(+) + H2O = (2S,4S)-4-hydroxy-2,3,4,5-tetrahydrodipicolinate + NADPH + H(+). It participates in amino-acid biosynthesis; L-lysine biosynthesis via DAP pathway; (S)-tetrahydrodipicolinate from L-aspartate: step 4/4. Its function is as follows. Catalyzes the conversion of 4-hydroxy-tetrahydrodipicolinate (HTPA) to tetrahydrodipicolinate. The protein is 4-hydroxy-tetrahydrodipicolinate reductase of Corynebacterium efficiens (strain DSM 44549 / YS-314 / AJ 12310 / JCM 11189 / NBRC 100395).